Consider the following 454-residue polypeptide: Zinc finger protein 474 (454 aa).

A disordered region spans residues 48–85 (RGEKIKTNPRKNRPGTVILSKQSSRRIMSGSQPRPPVI). Polar residues predominate over residues 66 to 79 (LSKQSSRRIMSGSQ). The C2HC/C3H-type 1 zinc-finger motif lies at 91 to 120 (GFRVCYICGREFGSQSLGIHEPQCLEKWRV). Zn(2+)-binding residues include C95, C98, H110, and C114. Residues 125–146 (LPKHLRRPEPSKPPPFSGSGSY) are disordered. 5 consecutive C2HC/C3H-type zinc fingers follow at residues 162–191 (QLLP…KVEG), 218–247 (RTVI…KWKV), 281–310 (QLVS…QPSG), 352–381 (PTIV…KWHN), and 425–454 (QLVP…KVAK). Residues C166, C169, H181, C185, C222, C225, H237, and C241 each coordinate Zn(2+). The tract at residues 256-282 (FRQPLPQKPQPLLTGQPKHAGPRQGQL) is disordered. The Zn(2+) site is built by C285, C288, H300, C304, C356, C359, H371, C375, C429, C432, H444, and C448. The segment at 299–345 (VHQRSCKAQPSGPKVQDLTLGSRGGLKESTNPKPQRNMAAPPVTDKP) is disordered.

Zn(2+) serves as cofactor.

The polypeptide is Zinc finger protein 474 (ZNF474) (Bos taurus (Bovine)).